Here is a 93-residue protein sequence, read N- to C-terminus: Large ribosomal subunit protein eL29 (93 aa).

Over residues 1–31 (MAKSKNHSTHHKNRKDHRNGIKKAVVHKKTS) the composition is skewed to basic residues. The tract at residues 1–33 (MAKSKNHSTHHKNRKDHRNGIKKAVVHKKTSSK) is disordered.

It belongs to the eukaryotic ribosomal protein eL29 family.

The sequence is that of Large ribosomal subunit protein eL29 (rpl29) from Dictyostelium discoideum (Social amoeba).